Here is a 508-residue protein sequence, read N- to C-terminus: Lysine--tRNA ligase (508 aa).

Positions 403 and 410 each coordinate Mg(2+).

It belongs to the class-II aminoacyl-tRNA synthetase family. As to quaternary structure, homodimer. It depends on Mg(2+) as a cofactor.

The protein resides in the cytoplasm. The catalysed reaction is tRNA(Lys) + L-lysine + ATP = L-lysyl-tRNA(Lys) + AMP + diphosphate. This Methanoculleus marisnigri (strain ATCC 35101 / DSM 1498 / JR1) protein is Lysine--tRNA ligase.